The following is a 379-amino-acid chain: Palmitoyltransferase swf1 (379 aa).

The Lumenal portion of the chain corresponds to M1–Y4. Residues I5–M25 traverse the membrane as a helical segment. The Cytoplasmic segment spans residues Y26 to S48. A helical transmembrane segment spans residues Q49–P69. Residues R70–R76 lie on the Lumenal side of the membrane. The helical transmembrane segment at L77–K97 threads the bilayer. Topologically, residues S98–H166 are cytoplasmic. The DHHC domain occupies H123–L173. C153 (S-palmitoyl cysteine intermediate) is an active-site residue. The chain crosses the membrane as a helical span at residues Y167–F187. The Lumenal portion of the chain corresponds to S188–R227. A helical transmembrane segment spans residues V228 to Y248. The Cytoplasmic portion of the chain corresponds to H249–R379.

Belongs to the DHHC palmitoyltransferase family. SWF1 subfamily.

It localises to the endoplasmic reticulum membrane. The catalysed reaction is L-cysteinyl-[protein] + hexadecanoyl-CoA = S-hexadecanoyl-L-cysteinyl-[protein] + CoA. Functionally, palmitoyltransferase that targets several endosomal SNAREs. Palmitoylates the SNAREs at cysteine residues close to the cytoplasmic end of their transmembrane domain. May have a role in the cellular quality control of transmembrane domain-containing proteins. The chain is Palmitoyltransferase swf1 (swf1) from Aspergillus fumigatus (strain ATCC MYA-4609 / CBS 101355 / FGSC A1100 / Af293) (Neosartorya fumigata).